We begin with the raw amino-acid sequence, 184 residues long: UPF0149 protein PA14_69010 (184 aa).

Belongs to the UPF0149 family.

This is UPF0149 protein PA14_69010 from Pseudomonas aeruginosa (strain UCBPP-PA14).